The chain runs to 82 residues: U17-hexatoxin-Hi1a (82 aa).

The first 21 residues, 1–21, serve as a signal peptide directing secretion; sequence MKTIFAVTLLLFAIYVPECMP. Cystine bridges form between cysteine 22–cysteine 33, cysteine 27–cysteine 48, cysteine 32–cysteine 61, cysteine 58–cysteine 69, and cysteine 63–cysteine 75.

As to expression, expressed by the venom gland.

The protein localises to the secreted. Probable ion channel inhibitor. This chain is U17-hexatoxin-Hi1a, found in Hadronyche infensa (Fraser island funnel-web spider).